The chain runs to 238 residues: Probable 2-phosphosulfolactate phosphatase (238 aa).

It belongs to the ComB family. It depends on Mg(2+) as a cofactor.

The enzyme catalyses (2R)-O-phospho-3-sulfolactate + H2O = (2R)-3-sulfolactate + phosphate. This chain is Probable 2-phosphosulfolactate phosphatase, found in Carboxydothermus hydrogenoformans (strain ATCC BAA-161 / DSM 6008 / Z-2901).